Consider the following 160-residue polypeptide: Ribosomal RNA large subunit methyltransferase H (160 aa).

2 residues coordinate S-adenosyl-L-methionine: L76 and G108.

It belongs to the RNA methyltransferase RlmH family. Homodimer.

Its subcellular location is the cytoplasm. It carries out the reaction pseudouridine(1915) in 23S rRNA + S-adenosyl-L-methionine = N(3)-methylpseudouridine(1915) in 23S rRNA + S-adenosyl-L-homocysteine + H(+). In terms of biological role, specifically methylates the pseudouridine at position 1915 (m3Psi1915) in 23S rRNA. The protein is Ribosomal RNA large subunit methyltransferase H of Bradyrhizobium diazoefficiens (strain JCM 10833 / BCRC 13528 / IAM 13628 / NBRC 14792 / USDA 110).